The chain runs to 525 residues: Phosphatidylinositol 4-kinase alpha 2 (525 aa).

Residues 163–278 are pleckstrin homology (PH) domain conferring phosphoinositide binding specificity; sequence SDVRQHIVDG…VKPQACIFKV (116 aa). Positions 239 to 509 constitute a PI3K/PI4K catalytic domain; that stretch reads VDSGIPLQSA…VCTDAYNKWT (271 aa). The tract at residues 245-251 is G-loop; it reads LQSAAKV. Residues 373 to 381 are catalytic loop; it reads QPKDRHNGN. The interval 392 to 417 is activation loop; it reads HIDFGFILETSPGGNMRFENAHFKLS.

It belongs to the PI3/PI4-kinase family. Type III PI4K subfamily.

The protein localises to the membrane. It carries out the reaction a 1,2-diacyl-sn-glycero-3-phospho-(1D-myo-inositol) + ATP = a 1,2-diacyl-sn-glycero-3-phospho-(1D-myo-inositol 4-phosphate) + ADP + H(+). Its function is as follows. Acts on phosphatidylinositol (PtdIns) in the first committed step in the production of the second messenger inositol-1,4,5,-trisphosphate. This chain is Phosphatidylinositol 4-kinase alpha 2 (PI4KA2), found in Arabidopsis thaliana (Mouse-ear cress).